The following is a 142-amino-acid chain: MARYMLLLLLAVWVLTGELWPGAEARAAPYGVRLCGREFIRAVIFTCGGSRWRRSDILAHEAMGDTFPDADADEDSLAGELDEAMGSSEWLALTKSPQAFYRGRPSWQGTPGVLRGSRDVLAGLSSSCCKWGCSKSEISSLC.

The N-terminal stretch at 1–25 (MARYMLLLLLAVWVLTGELWPGAEA) is a signal peptide. 3 cysteine pairs are disulfide-bonded: Cys35/Cys129, Cys47/Cys142, and Cys128/Cys133. A propeptide spans 55 to 118 (SDILAHEAMG…GTPGVLRGSR (64 aa)) (connecting peptide).

The protein belongs to the insulin family. As to quaternary structure, heterodimer of a B chain and an A chain linked by two disulfide bonds.

It localises to the secreted. May play a role in neuropeptide signaling processes. Ligand for LGR7, RXFP3 and RXFP4. This is Relaxin-3 (RLN3) from Homo sapiens (Human).